A 418-amino-acid polypeptide reads, in one-letter code: Ankyrin repeat and SOCS box protein 6 (418 aa).

6 ANK repeats span residues 65-95, 100-129, 134-164, 168-203, 224-253, and 258-287; these read EGVS…NLNF, TYYT…DINR, HESS…DVNA, NGKT…DVKA, CGDK…DPSE, and ESLT…AYNC. An SOCS box domain is found at 358 to 413; sequence ALHASLRQLESYPPPLKHLCRVSIRLCLRPWPVDTKVKALPLPDRLKWYLLSAHSD.

The protein belongs to the ankyrin SOCS box (ASB) family. In terms of assembly, binds APS. Identified in a complex with ELOB and ELOC. Interacts with CUL5 and RNF7. Interacts with SQSTM1. As to expression, detected in adipocytes.

It is found in the cytoplasm. It functions in the pathway protein modification; protein ubiquitination. Its function is as follows. Probable substrate-recognition component of a SCF-like ECS (Elongin-Cullin-SOCS-box protein) E3 ubiquitin-protein ligase complex which mediates the ubiquitination and subsequent proteasomal degradation of target proteins. May play a role in the regulation of cell proliferation and autophagy by promoting the ubiquitination and degradation of SQSTM1. The sequence is that of Ankyrin repeat and SOCS box protein 6 (Asb6) from Mus musculus (Mouse).